The following is a 184-amino-acid chain: Flagellar transcriptional regulator FlhC (184 aa).

The Zn(2+) site is built by C144, C147, C163, and C166.

Belongs to the FlhC family. In terms of assembly, heterohexamer composed of two FlhC and four FlhD subunits. Each FlhC binds a FlhD dimer, forming a heterotrimer, and a hexamer assembles by dimerization of two heterotrimers. Zn(2+) is required as a cofactor.

It is found in the cytoplasm. Its function is as follows. Functions in complex with FlhD as a master transcriptional regulator that regulates transcription of several flagellar and non-flagellar operons by binding to their promoter region. Activates expression of class 2 flagellar genes, including fliA, which is a flagellum-specific sigma factor that turns on the class 3 genes. Also regulates genes whose products function in a variety of physiological pathways. This chain is Flagellar transcriptional regulator FlhC, found in Verminephrobacter eiseniae (strain EF01-2).